The chain runs to 577 residues: E3 ubiquitin protein ligase RIN3 (577 aa).

6 helical membrane passes run 3 to 23 (ITYL…LQVW), 58 to 78 (TTIA…VLSL), 120 to 140 (GVLW…QALA), 162 to 182 (YSAL…SLMI), 191 to 211 (YLLL…ALLI), and 272 to 292 (YLHI…VLFL). The RING-type; atypical zinc finger occupies 337–379 (CAICREPMAKAKRLHCNHLFHLGCLRSWLDQGLNEVYSCPTCR). Residues 537–577 (SILAMAETVREVLPHVPDEIIFQDLQRTNSVSVTVNNLLQM) enclose the CUE domain.

Interacts (via C-terminus) with RPM1 (via N-terminus).

It is found in the membrane. The enzyme catalyses S-ubiquitinyl-[E2 ubiquitin-conjugating enzyme]-L-cysteine + [acceptor protein]-L-lysine = [E2 ubiquitin-conjugating enzyme]-L-cysteine + N(6)-ubiquitinyl-[acceptor protein]-L-lysine.. The protein operates within protein modification; protein ubiquitination. Functionally, E3 ubiquitin protein ligase that acts as a positive regulator of RPM1- and RPS2-dependent hypersensitive response (HR), in association with RIN2. Probably not required for RPM1 degradation during HR. This Arabidopsis thaliana (Mouse-ear cress) protein is E3 ubiquitin protein ligase RIN3 (RIN3).